Here is a 55-residue protein sequence, read N- to C-terminus: Large ribosomal subunit protein bL33 (55 aa).

This sequence belongs to the bacterial ribosomal protein bL33 family.

The sequence is that of Large ribosomal subunit protein bL33 from Methylobacterium nodulans (strain LMG 21967 / CNCM I-2342 / ORS 2060).